The chain runs to 608 residues: 1-deoxy-D-xylulose-5-phosphate synthase (608 aa).

Thiamine diphosphate-binding positions include histidine 66 and 107 to 109; that span reads GHA. Aspartate 138 lines the Mg(2+) pocket. Thiamine diphosphate is bound by residues 139–140, asparagine 167, phenylalanine 277, and glutamate 350; that span reads GA. Residue asparagine 167 participates in Mg(2+) binding.

This sequence belongs to the transketolase family. DXPS subfamily. In terms of assembly, homodimer. Requires Mg(2+) as cofactor. The cofactor is thiamine diphosphate.

It catalyses the reaction D-glyceraldehyde 3-phosphate + pyruvate + H(+) = 1-deoxy-D-xylulose 5-phosphate + CO2. It functions in the pathway metabolic intermediate biosynthesis; 1-deoxy-D-xylulose 5-phosphate biosynthesis; 1-deoxy-D-xylulose 5-phosphate from D-glyceraldehyde 3-phosphate and pyruvate: step 1/1. Catalyzes the acyloin condensation reaction between C atoms 2 and 3 of pyruvate and glyceraldehyde 3-phosphate to yield 1-deoxy-D-xylulose-5-phosphate (DXP). In Thermotoga sp. (strain RQ2), this protein is 1-deoxy-D-xylulose-5-phosphate synthase.